The sequence spans 134 residues: MDVFMKGLSMAKEGVVAAAEKTKQGVTEAAEKTKEGVLYVGSKTREGVVQGVASVAEKTKEQASHLGGAVFSGAGNIAAATGLVKREEFPTDLKPEEVAQEAAEEPLIEPLMEPEGESYEDPPQEEYQEYEPEA.

2 tandem repeats follow at residues 20–30 and 31–41. The segment at 20-67 is 4 X 11 AA tandem repeats of [EGS]-K-T-K-[EQ]-[GQ]-V-X(4); the sequence is EKTKQGVTEAAEKTKEGVLYVGSKTREGVVQGVASVAEKTKEQASHLG. The stretch at 42–56 is one 3; approximate repeat; it reads SKTREGVVQGVASVA. Repeat 4 spans residues 57-67; that stretch reads EKTKEQASHLG. The disordered stretch occupies residues 89-134; sequence FPTDLKPEEVAQEAAEEPLIEPLMEPEGESYEDPPQEEYQEYEPEA. Residues 98–134 are compositionally biased toward acidic residues; the sequence is VAQEAAEEPLIEPLMEPEGESYEDPPQEEYQEYEPEA. A Phosphoserine; by BARK1, CK2 and GRK5 modification is found at Ser118.

Belongs to the synuclein family. Phosphorylated. Phosphorylation by G-protein coupled receptor kinases (GRK) is more efficient than phosphorylation by CK1, CK2 and CaM-kinase II. In terms of tissue distribution, expressed predominantly in brain; concentrated in presynaptic nerve terminals.

It is found in the cytoplasm. Its function is as follows. Non-amyloid component of senile plaques found in Alzheimer disease. Could act as a regulator of SNCA aggregation process. Protects neurons from staurosporine and 6-hydroxy dopamine (6OHDA)-stimulated caspase activation in a p53/TP53-dependent manner. Contributes to restore the SNCA anti-apoptotic function abolished by 6OHDA. Not found in the Lewy bodies associated with Parkinson disease. This is Beta-synuclein (SNCB) from Homo sapiens (Human).